Here is a 215-residue protein sequence, read N- to C-terminus: ATP-dependent dethiobiotin synthetase BioD (215 aa).

An ATP-binding site is contributed by 13-18; that stretch reads DIGKTI. A Mg(2+)-binding site is contributed by Thr17. Residue Lys38 is part of the active site. A substrate-binding site is contributed by Thr42. ATP contacts are provided by residues Asp50, 115 to 118, and 175 to 176; these read EGAG and NH. Residues Asp50 and Glu115 each coordinate Mg(2+).

The protein belongs to the dethiobiotin synthetase family. As to quaternary structure, homodimer. It depends on Mg(2+) as a cofactor.

The protein resides in the cytoplasm. It carries out the reaction (7R,8S)-7,8-diammoniononanoate + CO2 + ATP = (4R,5S)-dethiobiotin + ADP + phosphate + 3 H(+). The protein operates within cofactor biosynthesis; biotin biosynthesis; biotin from 7,8-diaminononanoate: step 1/2. In terms of biological role, catalyzes a mechanistically unusual reaction, the ATP-dependent insertion of CO2 between the N7 and N8 nitrogen atoms of 7,8-diaminopelargonic acid (DAPA, also called 7,8-diammoniononanoate) to form a ureido ring. The chain is ATP-dependent dethiobiotin synthetase BioD from Neisseria meningitidis serogroup A / serotype 4A (strain DSM 15465 / Z2491).